The sequence spans 131 residues: Profilin-5 (131 aa).

A disulfide bridge links Cys13 with Cys115. An Involved in PIP2 interaction motif is present at residues 81 to 97; sequence AVIRGKKGAGGITIKKT. A Phosphothreonine modification is found at Thr111.

It belongs to the profilin family. As to quaternary structure, occurs in many kinds of cells as a complex with monomeric actin in a 1:1 ratio. Post-translationally, phosphorylated by MAP kinases.

Its subcellular location is the cytoplasm. It is found in the cytoskeleton. Binds to actin and affects the structure of the cytoskeleton. At high concentrations, profilin prevents the polymerization of actin, whereas it enhances it at low concentrations. The protein is Profilin-5 of Phleum pratense (Common timothy).